A 304-amino-acid chain; its full sequence is Glutaminase (304 aa).

Positions 63, 114, 158, 165, 189, 240, and 258 each coordinate substrate.

The protein belongs to the glutaminase family. In terms of assembly, homotetramer.

It catalyses the reaction L-glutamine + H2O = L-glutamate + NH4(+). This is Glutaminase from Shewanella baltica (strain OS185).